The following is a 467-amino-acid chain: tRNA-2-methylthio-N(6)-dimethylallyladenosine synthase (467 aa).

Residues 22–138 (GSYWITTFGC…LETLLNKVET (117 aa)) enclose the MTTase N-terminal domain. [4Fe-4S] cluster-binding residues include cysteine 31, cysteine 67, cysteine 101, cysteine 173, cysteine 177, and cysteine 180. The Radical SAM core domain occupies 159–396 (RDSSICAWVN…NSLVEIKAKE (238 aa)). One can recognise a TRAM domain in the interval 399–467 (VRYKDRVEEV…AFSLSGVIEN (69 aa)).

Belongs to the methylthiotransferase family. MiaB subfamily. In terms of assembly, monomer. It depends on [4Fe-4S] cluster as a cofactor.

It is found in the cytoplasm. The catalysed reaction is N(6)-dimethylallyladenosine(37) in tRNA + (sulfur carrier)-SH + AH2 + 2 S-adenosyl-L-methionine = 2-methylsulfanyl-N(6)-dimethylallyladenosine(37) in tRNA + (sulfur carrier)-H + 5'-deoxyadenosine + L-methionine + A + S-adenosyl-L-homocysteine + 2 H(+). In terms of biological role, catalyzes the methylthiolation of N6-(dimethylallyl)adenosine (i(6)A), leading to the formation of 2-methylthio-N6-(dimethylallyl)adenosine (ms(2)i(6)A) at position 37 in tRNAs that read codons beginning with uridine. In Prochlorococcus marinus (strain MIT 9211), this protein is tRNA-2-methylthio-N(6)-dimethylallyladenosine synthase.